We begin with the raw amino-acid sequence, 153 residues long: Large ribosomal subunit protein uL13 (153 aa).

It belongs to the universal ribosomal protein uL13 family. In terms of assembly, part of the 50S ribosomal subunit.

This protein is one of the early assembly proteins of the 50S ribosomal subunit, although it is not seen to bind rRNA by itself. It is important during the early stages of 50S assembly. The protein is Large ribosomal subunit protein uL13 of Chelativorans sp. (strain BNC1).